A 557-amino-acid polypeptide reads, in one-letter code: Small ribosomal subunit protein bS1 (557 aa).

4 consecutive S1 motif domains span residues 21-87 (GSIV…LSRE), 105-171 (AETV…VSRR), 192-260 (GMEV…LGLK), and 277-347 (GTKL…LGLK). 3 positions are modified to N6-acetyllysine: Lys-229, Lys-279, and Lys-363. 2 S1 motif domains span residues 364–434 (GDRV…LGVK) and 451–520 (GAIV…LSVR).

This sequence belongs to the bacterial ribosomal protein bS1 family. As to quaternary structure, part of the 30S ribosomal subunit. Some nascent polypeptide chains are able to cross-link to this protein in situ. Can be cross-linked to mRNA in the ribosome. Phosphorylated; probably on a serine.

In terms of biological role, required for translation of most natural mRNAs except for leaderless mRNA. Binds mRNA upstream of the Shine-Dalgarno (SD) sequence and helps it bind to the 30S ribosomal subunit; acts as an RNA chaperone to unfold structured mRNA on the ribosome but is not essential for mRNAs with strong SDs and little 5'-UTR structure, thus it may help fine-tune which mRNAs that are translated. Unwinds dsRNA by binding to transiently formed ssRNA regions; binds about 10 nucleotides. Has a preference for polypyrimidine tracts. Negatively autoregulates its own translation. The polypeptide is Small ribosomal subunit protein bS1 (rpsA) (Escherichia coli O157:H7).